The primary structure comprises 628 residues: Leucine-rich repeat and fibronectin type-III domain-containing protein 3 (628 aa).

An N-terminal signal peptide occupies residues 1-16 (MAVLPLLLCLLPLAPA). The Extracellular portion of the chain corresponds to 17–540 (SSPSQPATPS…APHAPFLGGT (524 aa)). In terms of domain architecture, LRRNT spans 19-59 (PSQPATPSPCPRRCRCQTQSLPLSVLCPGAGLLFVPPSLDR). LRR repeat units lie at residues 84 to 105 (GLLHLSLSRNTIRHVAAGAFAD), 108 to 129 (ALRALHLDGNRLTSLGEGQLRG), 132 to 153 (NLRHLILSNNQLAALAAGALDD), 157 to 178 (TLEDLDLSYNNLEQLPWEALGR), 181 to 202 (NVNTLGLDHNLLASVPAGAFSR), and 205 to 226 (KLARLDMTSNRLTTIPPDPLFS). Residues 249 to 295 (NPLHCNCELVWLRRLAREDDLEACASPPALGGRYFWAVGEEEFVCEP) enclose the LRRCT domain. Residues 295 to 382 (PPVVTHRSPP…GEATAAVELT (88 aa)) form the Ig-like domain. Residues C317 and C366 are joined by a disulfide bond. N348 and N393 each carry an N-linked (GlcNAc...) asparagine glycan. Residues 380–432 (ELTVGPPPPPQLANSTSCDPPRDGDPDALTPPSAASASAAAKAADTGPPTDRG) are disordered. Residues 406 to 429 (DALTPPSAASASAAAKAADTGPPT) are compositionally biased toward low complexity. One can recognise a Fibronectin type-III domain in the interval 427–525 (PPTDRGVQVT…GCARFSTEPA (99 aa)). The chain crosses the membrane as a helical span at residues 541–561 (MIIALGGVIVASVLVFIFVLL). Topologically, residues 562–628 (MRYKVHGGQP…WRPSHEPTGP (67 aa)) are cytoplasmic. Residues 587–628 (QTNGSLGPTPAPPAPEPAAPRAHTVVQLDCEPWRPSHEPTGP) form a disordered region. The segment covering 595–604 (TPAPPAPEPA) has biased composition (pro residues). Basic and acidic residues predominate over residues 617 to 628 (EPWRPSHEPTGP).

The protein belongs to the LRFN family. As to quaternary structure, can form heteromeric complexes with LRFN1, LRFN2, LRFN4 and LRFN5. Able to form homomeric complexes across cell junctions, between adjacent cells. Does not interact with DLG4. Post-translationally, N-glycosylated.

The protein resides in the cell membrane. Its subcellular location is the cell projection. The protein localises to the axon. It is found in the dendrite. It localises to the synapse. The protein resides in the presynaptic cell membrane. Its subcellular location is the postsynaptic cell membrane. Its function is as follows. Cell adhesion molecule that mediates homophilic cell-cell adhesion in a Ca(2+)-independent manner. Promotes neurite outgrowth in hippocampal neurons. The polypeptide is Leucine-rich repeat and fibronectin type-III domain-containing protein 3 (LRFN3) (Ailuropoda melanoleuca (Giant panda)).